The chain runs to 574 residues: Desiccation/radiation resistance protein DR_1769 (574 aa).

The signal sequence occupies residues 1–33 (MPDPAARRFSLPPFPLAALALSVALLGAPASLA). Residues 400–438 (TAQTQARQAAAAASTSQQPRLPTLAQAPAPTPAPAQTTP) show a composition bias toward low complexity. The disordered stretch occupies residues 400-461 (TAQTQARQAA…APVPPVASPA (62 aa)). Over residues 439-459 (RPQPTPAQPATPAAPVPPVAS) the composition is skewed to pro residues.

Plays an important role in resistance to desiccation and radiation, maybe by protecting genome integrity under extreme conditions. This is Desiccation/radiation resistance protein DR_1769 from Deinococcus radiodurans (strain ATCC 13939 / DSM 20539 / JCM 16871 / CCUG 27074 / LMG 4051 / NBRC 15346 / NCIMB 9279 / VKM B-1422 / R1).